A 241-amino-acid chain; its full sequence is Uridylate kinase (241 aa).

K15–G18 is a binding site for ATP. G57 serves as a coordination point for UMP. 2 residues coordinate ATP: G58 and R62. Residues D77 and I139–T146 each bind UMP. ATP-binding residues include T166, N167, F172, and D175.

It belongs to the UMP kinase family. As to quaternary structure, homohexamer.

Its subcellular location is the cytoplasm. It carries out the reaction UMP + ATP = UDP + ADP. It participates in pyrimidine metabolism; CTP biosynthesis via de novo pathway; UDP from UMP (UMPK route): step 1/1. Inhibited by UTP. Its function is as follows. Catalyzes the reversible phosphorylation of UMP to UDP. The chain is Uridylate kinase from Wigglesworthia glossinidia brevipalpis.